Here is a 739-residue protein sequence, read N- to C-terminus: Cleavage and polyadenylation specificity factor subunit 2 (739 aa).

Residues 411-423 (VKEEETKASHGSD) show a composition bias toward basic and acidic residues. Positions 411–430 (VKEEETKASHGSDDNSSEPM) are disordered.

The protein belongs to the metallo-beta-lactamase superfamily. RNA-metabolizing metallo-beta-lactamase-like family. CPSF2/YSH1 subfamily. In terms of assembly, component of the CPSF complex, at least composed of CPSF160, CPSF100, CPSF73-I, CPSF73-II, CPSF30, FY and FIPS5. Forms a complex with cleavage and polyadenylation specificity factor (CPSF) subunits FY, PAPS2, CSTF50, CPSF30, CPSF73-I, CPSF73-II and CPSF160.

It is found in the nucleus. It localises to the cytoplasm. In terms of biological role, CPSF plays a key role in pre-mRNA 3'-end formation, recognizing the AAUAAA signal sequence and interacting with poly(A)polymerase and other factors to bring about cleavage and poly(A) addition. Required for antisense-RNA-mediated gene silencing. This Arabidopsis thaliana (Mouse-ear cress) protein is Cleavage and polyadenylation specificity factor subunit 2 (CPSF100).